A 508-amino-acid polypeptide reads, in one-letter code: DNA-directed RNA polymerase subunit alpha (508 aa).

Residues 1-380 (MKHILLSCVE…HLFSPFLQTH (380 aa)) are alpha N-terminal domain (alpha-NTD). Positions 434–508 (NLVTAIQTLD…LKNFGVLPTS (75 aa)) are alpha C-terminal domain (alpha-CTD).

It belongs to the RNA polymerase alpha chain family. In terms of assembly, in plastids the minimal PEP RNA polymerase catalytic core is composed of four subunits: alpha, beta, beta', and beta''. When a (nuclear-encoded) sigma factor is associated with the core the holoenzyme is formed, which can initiate transcription.

It is found in the plastid. Its subcellular location is the chloroplast. The catalysed reaction is RNA(n) + a ribonucleoside 5'-triphosphate = RNA(n+1) + diphosphate. DNA-dependent RNA polymerase catalyzes the transcription of DNA into RNA using the four ribonucleoside triphosphates as substrates. The polypeptide is DNA-directed RNA polymerase subunit alpha (rpoA) (Oltmannsiellopsis viridis (Marine flagellate)).